Consider the following 198-residue polypeptide: Nucleoid occlusion factor SlmA (198 aa).

The region spanning 10–70 is the HTH tetR-type domain; that stretch reads NRREEILQSL…SLIEFIEDSL (61 aa). The segment at residues 33 to 52 is a DNA-binding region (H-T-H motif); sequence TTAKLAASVGVSEAALYRHF. A coiled-coil region spans residues 117–144; the sequence is EQDRLQGRINQLFERIEAQLRQVLREKR.

The protein belongs to the nucleoid occlusion factor SlmA family. In terms of assembly, homodimer. Interacts with FtsZ.

It is found in the cytoplasm. The protein resides in the nucleoid. Functionally, required for nucleoid occlusion (NO) phenomenon, which prevents Z-ring formation and cell division over the nucleoid. Acts as a DNA-associated cell division inhibitor that binds simultaneously chromosomal DNA and FtsZ, and disrupts the assembly of FtsZ polymers. SlmA-DNA-binding sequences (SBS) are dispersed on non-Ter regions of the chromosome, preventing FtsZ polymerization at these regions. The chain is Nucleoid occlusion factor SlmA from Escherichia coli (strain 55989 / EAEC).